Reading from the N-terminus, the 178-residue chain is ATP synthase subunit b, chloroplastic (178 aa).

The chain crosses the membrane as a helical span at residues 26-46 (TNLINIIILLIILFYFLKGLL).

It belongs to the ATPase B chain family. As to quaternary structure, F-type ATPases have 2 components, F(1) - the catalytic core - and F(0) - the membrane proton channel. F(1) has five subunits: alpha(3), beta(3), gamma(1), delta(1), epsilon(1). F(0) has four main subunits: a(1), b(1), b'(1) and c(10-14). The alpha and beta chains form an alternating ring which encloses part of the gamma chain. F(1) is attached to F(0) by a central stalk formed by the gamma and epsilon chains, while a peripheral stalk is formed by the delta, b and b' chains.

It is found in the plastid. Its subcellular location is the chloroplast thylakoid membrane. In terms of biological role, f(1)F(0) ATP synthase produces ATP from ADP in the presence of a proton or sodium gradient. F-type ATPases consist of two structural domains, F(1) containing the extramembraneous catalytic core and F(0) containing the membrane proton channel, linked together by a central stalk and a peripheral stalk. During catalysis, ATP synthesis in the catalytic domain of F(1) is coupled via a rotary mechanism of the central stalk subunits to proton translocation. Component of the F(0) channel, it forms part of the peripheral stalk, linking F(1) to F(0). In Vaucheria litorea (Yellow-green alga), this protein is ATP synthase subunit b, chloroplastic.